The chain runs to 384 residues: Putative glutamate--cysteine ligase 2-1 (384 aa).

Belongs to the glutamate--cysteine ligase type 2 family. YbdK subfamily.

The catalysed reaction is L-cysteine + L-glutamate + ATP = gamma-L-glutamyl-L-cysteine + ADP + phosphate + H(+). ATP-dependent carboxylate-amine ligase which exhibits weak glutamate--cysteine ligase activity. This is Putative glutamate--cysteine ligase 2-1 from Paenarthrobacter aurescens (strain TC1).